The sequence spans 165 residues: Peptide methionine sulfoxide reductase MsrA (165 aa).

The active site involves C11.

Belongs to the MsrA Met sulfoxide reductase family.

It catalyses the reaction L-methionyl-[protein] + [thioredoxin]-disulfide + H2O = L-methionyl-(S)-S-oxide-[protein] + [thioredoxin]-dithiol. The enzyme catalyses [thioredoxin]-disulfide + L-methionine + H2O = L-methionine (S)-S-oxide + [thioredoxin]-dithiol. Has an important function as a repair enzyme for proteins that have been inactivated by oxidation. Catalyzes the reversible oxidation-reduction of methionine sulfoxide in proteins to methionine. This is Peptide methionine sulfoxide reductase MsrA from Ureaplasma urealyticum serovar 10 (strain ATCC 33699 / Western).